We begin with the raw amino-acid sequence, 1198 residues long: Phosphatidylinositol-3,5-bisphosphate 3-phosphatase MTMR3 (1198 aa).

S8 is modified (phosphoserine). Positions 155–576 (EHVTSRFKNE…RNLMLWSAVY (422 aa)) constitute a Myotubularin phosphatase domain. Residues 265-280 (SRSSGSKLSTRNTSRD) are compositionally biased toward polar residues. The interval 265 to 285 (SRSSGSKLSTRNTSRDFPNGG) is disordered. The a 1,2-diacyl-sn-glycero-3-phospho-(1D-myo-inositol-3,5-bisphosphate) site is built by N326, N351, and I352. Residues N326, N351, and I352 each contribute to the a 1,2-diacyl-sn-glycero-3-phospho-(1D-myo-inositol-3-phosphate) site. C413 functions as the Phosphocysteine intermediate in the catalytic mechanism. A 1,2-diacyl-sn-glycero-3-phospho-(1D-myo-inositol-3,5-bisphosphate) contacts are provided by S414, D415, G416, W417, D418, R419, K455, and R459. A 1,2-diacyl-sn-glycero-3-phospho-(1D-myo-inositol-3-phosphate)-binding residues include S414, D415, G416, W417, D418, and R419. R459 is an a 1,2-diacyl-sn-glycero-3-phospho-(1D-myo-inositol-3-phosphate) binding site. The disordered stretch occupies residues 590 to 612 (CAPYPAPGTSPDDPPLSRLPKTR). A compositionally biased stretch (pro residues) spans 593-603 (YPAPGTSPDDP). 4 positions are modified to phosphoserine: S613, S633, S647, and S651. Disordered stretches follow at residues 650-669 (LSSL…LGKP), 716-735 (EGKE…PEAS), and 855-891 (KSVS…SLVE). A compositionally biased stretch (basic and acidic residues) spans 716–732 (EGKEDPLLEKESRRKTP). T731 is modified (phosphothreonine). Residues S906 and S909 each carry the phosphoserine modification. Disordered stretches follow at residues 933 to 974 (ETEN…SRQL) and 993 to 1019 (WLHS…DDDG). Residues 999–1010 (GRPSATSSPDQP) are compositionally biased toward polar residues. The stretch at 1029 to 1062 (QRLRQIESGHQQEVETLKKQVQELKSRLESQYLT) forms a coiled coil. S1064 is modified (phosphoserine). The segment at 1119–1179 (DHLAAHCYAC…VCKSCYSSLH (61 aa)) adopts an FYVE-type zinc-finger fold. 8 residues coordinate Zn(2+): C1125, C1128, C1141, C1144, C1149, C1152, C1171, and C1174.

Belongs to the protein-tyrosine phosphatase family. Non-receptor class myotubularin subfamily. In terms of assembly, forms heterodimers with MTMR4 that recruit both CEP55 and PLK1; occurs during early mitosis, regulates the phosphorylation of CEP55 by PLK1 and its recruitment to the midbody where it mediates cell abscission. Post-translationally, phosphorylated by CDK1 during mitosis.

The protein resides in the cytoplasm. It is found in the cytosol. The protein localises to the membrane. The enzyme catalyses a 1,2-diacyl-sn-glycero-3-phospho-(1D-myo-inositol-3,5-bisphosphate) + H2O = a 1,2-diacyl-sn-glycero-3-phospho-(1D-myo-inositol-5-phosphate) + phosphate. The catalysed reaction is a 1,2-diacyl-sn-glycero-3-phospho-(1D-myo-inositol-3-phosphate) + H2O = a 1,2-diacyl-sn-glycero-3-phospho-(1D-myo-inositol) + phosphate. It carries out the reaction 1,2-dihexadecanoyl-sn-glycero-3-phospho-(1D-myo-inositol-3-phosphate) + H2O = 1,2-dihexadecanoyl-sn-glycero-3-phospho-(1D-myo-inositol) + phosphate. It catalyses the reaction 1,2-dioctanoyl-sn-glycero-3-phospho-(1-D-myo-inositol-3-phosphate) + H2O = 1,2-dioctanoyl-sn-glycero-3-phospho-(1D-myo-inositol) + phosphate. The enzyme catalyses 1,2-dihexadecanoyl-sn-glycero-3-phospho-(1D-myo-inositol-3,5-phosphate) + H2O = 1,2-dihexadecanoyl-sn-glycero-3-phospho-(1D-myo-inositol-5-phosphate) + phosphate. Its function is as follows. Lipid phosphatase that specifically dephosphorylates the D-3 position of phosphatidylinositol 3-phosphate and phosphatidylinositol 3,5-bisphosphate, generating phosphatidylinositol and phosphatidylinositol 5-phosphate. Decreases the levels of phosphatidylinositol 3-phosphate, a phospholipid found in cell membranes where it acts as key regulator of both cell signaling and intracellular membrane traffic. Could also have a molecular sequestering/adapter activity and regulate biological processes independently of its phosphatase activity. It includes the regulation of midbody abscission during mitotic cytokinesis. This chain is Phosphatidylinositol-3,5-bisphosphate 3-phosphatase MTMR3, found in Homo sapiens (Human).